The following is a 971-amino-acid chain: Translation initiation factor IF-2 (971 aa).

Over residues 48–63 (DHLRKSHGATDGDKRK) the composition is skewed to basic and acidic residues. Disordered stretches follow at residues 48-86 (DHLR…ARTI) and 101-381 (DVAE…STFQ). A compositionally biased stretch (low complexity) spans 105 to 114 (GADQGQAQVA). Over residues 121–181 (ELKRREEEAR…EEEAATKRAA (61 aa)) the composition is skewed to basic and acidic residues. Positions 182-203 (AEAAAAQQQAAAQQAAAEQEAT) are enriched in low complexity. Residues 210–261 (DEARAAAERAAQREAAKKAEDAAREAADKARAEQEEISKRRAAAEAEARAIR) show a composition bias toward basic and acidic residues. The segment covering 277 to 286 (PPKPVEPPKP) has biased composition (pro residues). Low complexity predominate over residues 304–326 (ARPAVKKPAGAAAPATTQAPAGA). Positions 356–369 (SSGGVDRGWRGGPK) are enriched in gly residues. Positions 471–640 (PRPPVVTVMG…LLQAEVLELK (170 aa)) constitute a tr-type G domain. Positions 480-487 (GHVDHGKT) are G1. 480–487 (GHVDHGKT) is a GTP binding site. The interval 505–509 (GITQH) is G2. A G3 region spans residues 526–529 (DTPG). Residues 526 to 530 (DTPGH) and 580 to 583 (NKID) each bind GTP. Residues 580–583 (NKID) form a G4 region. The tract at residues 616-618 (SAK) is G5.

It belongs to the TRAFAC class translation factor GTPase superfamily. Classic translation factor GTPase family. IF-2 subfamily.

Its subcellular location is the cytoplasm. In terms of biological role, one of the essential components for the initiation of protein synthesis. Protects formylmethionyl-tRNA from spontaneous hydrolysis and promotes its binding to the 30S ribosomal subunits. Also involved in the hydrolysis of GTP during the formation of the 70S ribosomal complex. In Burkholderia orbicola (strain MC0-3), this protein is Translation initiation factor IF-2.